Here is a 117-residue protein sequence, read N- to C-terminus: Immunoglobulin lambda variable 10-54 (117 aa).

A signal peptide spans 1–21 (MPWALLLLTLLTHSAVSVVQA). A framework-1 region spans residues 20–43 (QAGLTQPPSVSKGLRQTATLTCTG). One can recognise an Ig-like domain in the interval 22–117 (GLTQPPSVSK…CSALDSSLSA (96 aa)). An intrachain disulfide couples cysteine 41 to cysteine 108. Residues 44-52 (NSNIVGNQG) are complementarity-determining-1. Positions 53–69 (AAWLQQHQGHPPKLLSY) are framework-2. Positions 70-72 (RNN) are complementarity-determining-2. Positions 73–108 (NRPSGISERFSASRSGNTASLTITGLQPEDEADYYC) are framework-3. The segment at 109–117 (SALDSSLSA) is complementarity-determining-3.

Immunoglobulins are composed of two identical heavy chains and two identical light chains; disulfide-linked.

It is found in the secreted. It localises to the cell membrane. In terms of biological role, v region of the variable domain of immunoglobulin light chains that participates in the antigen recognition. Immunoglobulins, also known as antibodies, are membrane-bound or secreted glycoproteins produced by B lymphocytes. In the recognition phase of humoral immunity, the membrane-bound immunoglobulins serve as receptors which, upon binding of a specific antigen, trigger the clonal expansion and differentiation of B lymphocytes into immunoglobulins-secreting plasma cells. Secreted immunoglobulins mediate the effector phase of humoral immunity, which results in the elimination of bound antigens. The antigen binding site is formed by the variable domain of one heavy chain, together with that of its associated light chain. Thus, each immunoglobulin has two antigen binding sites with remarkable affinity for a particular antigen. The variable domains are assembled by a process called V-(D)-J rearrangement and can then be subjected to somatic hypermutations which, after exposure to antigen and selection, allow affinity maturation for a particular antigen. In Homo sapiens (Human), this protein is Immunoglobulin lambda variable 10-54.